The following is a 122-amino-acid chain: Acidic phospholipase A2 Tpu-E6b (122 aa).

Disulfide bonds link cysteine 26–cysteine 115, cysteine 28–cysteine 44, cysteine 43–cysteine 95, cysteine 49–cysteine 122, cysteine 50–cysteine 88, cysteine 57–cysteine 81, and cysteine 75–cysteine 86. Ca(2+)-binding residues include tyrosine 27, glycine 29, and glycine 31. Histidine 47 is an active-site residue. Position 48 (aspartate 48) interacts with Ca(2+). Residue aspartate 89 is part of the active site.

In terms of assembly, monomer. It depends on Ca(2+) as a cofactor. In terms of tissue distribution, expressed by the venom gland.

The protein localises to the secreted. The enzyme catalyses a 1,2-diacyl-sn-glycero-3-phosphocholine + H2O = a 1-acyl-sn-glycero-3-phosphocholine + a fatty acid + H(+). Its function is as follows. Snake venom phospholipase A2 (PLA2) that weakly inhibits ADP-induced platelet aggregation when tested on platelet rich plasma from human and rabbit blood (15-25% of inhibition at 5-10 ug of enzyme). Exhibits moderate hydrolytic activities toward L-dipalmitoyl phosphatidylcholine. PLA2 catalyzes the calcium-dependent hydrolysis of the 2-acyl groups in 3-sn-phosphoglycerides. This chain is Acidic phospholipase A2 Tpu-E6b, found in Craspedocephalus puniceus (Flat-nosed pitviper).